The chain runs to 718 residues: Polyphosphate kinase (718 aa).

N47 is a binding site for ATP. Residues R372 and R402 each contribute to the Mg(2+) site. H432 serves as the catalytic Phosphohistidine intermediate. 3 residues coordinate ATP: Y465, R561, and H589. The disordered stretch occupies residues 683 to 718; sequence KADHGDTTPTSNAHQFIPMMSPKNEPDASDLDREDD. The segment covering 709-718 has biased composition (acidic residues); that stretch reads DASDLDREDD.

The protein belongs to the polyphosphate kinase 1 (PPK1) family. Mg(2+) serves as cofactor. Post-translationally, an intermediate of this reaction is the autophosphorylated ppk in which a phosphate is covalently linked to a histidine residue through a N-P bond.

It carries out the reaction [phosphate](n) + ATP = [phosphate](n+1) + ADP. In terms of biological role, catalyzes the reversible transfer of the terminal phosphate of ATP to form a long-chain polyphosphate (polyP). The polypeptide is Polyphosphate kinase (Lactiplantibacillus plantarum (strain ATCC BAA-793 / NCIMB 8826 / WCFS1) (Lactobacillus plantarum)).